A 150-amino-acid polypeptide reads, in one-letter code: Meiotic expression up-regulated protein 15 (150 aa).

In Schizosaccharomyces pombe (strain 972 / ATCC 24843) (Fission yeast), this protein is Meiotic expression up-regulated protein 15 (meu15).